A 352-amino-acid polypeptide reads, in one-letter code: Phospho-N-acetylmuramoyl-pentapeptide-transferase (352 aa).

Helical transmembrane passes span 10–30 (YMFFSYISVRAGFAFFIALFL), 67–87 (TMGGLIFIFATIVASLLCADL), 88–108 (NNFYVIIGILCLVLFCTIGLV), 129–149 (LLSQFIASFICVFFLYIMGIN), 159–179 (YALFDGGIFMLALWILVIISS), 191–211 (GLATVPSIFSLLSLSAFLYLS), 227–247 (GLGELVVLSAALVGALMGFLW), 255–275 (VFMGDSGSLSIGAFLGYLGIV), 280–300 (ILLLLIGFVFVLETISVILQV), and 329–349 (KIIVRFWMIALLANIIALISI).

This sequence belongs to the glycosyltransferase 4 family. MraY subfamily. Requires Mg(2+) as cofactor.

It is found in the cell inner membrane. The enzyme catalyses UDP-N-acetyl-alpha-D-muramoyl-L-alanyl-gamma-D-glutamyl-meso-2,6-diaminopimeloyl-D-alanyl-D-alanine + di-trans,octa-cis-undecaprenyl phosphate = di-trans,octa-cis-undecaprenyl diphospho-N-acetyl-alpha-D-muramoyl-L-alanyl-D-glutamyl-meso-2,6-diaminopimeloyl-D-alanyl-D-alanine + UMP. Its pathway is cell wall biogenesis; peptidoglycan biosynthesis. Its function is as follows. Catalyzes the initial step of the lipid cycle reactions in the biosynthesis of the cell wall peptidoglycan: transfers peptidoglycan precursor phospho-MurNAc-pentapeptide from UDP-MurNAc-pentapeptide onto the lipid carrier undecaprenyl phosphate, yielding undecaprenyl-pyrophosphoryl-MurNAc-pentapeptide, known as lipid I. This chain is Phospho-N-acetylmuramoyl-pentapeptide-transferase, found in Campylobacter lari (strain RM2100 / D67 / ATCC BAA-1060).